Consider the following 449-residue polypeptide: UDP-N-acetylmuramoylalanine--D-glutamate ligase (449 aa).

118-124 (GTNGKTT) is an ATP binding site.

The protein belongs to the MurCDEF family.

The protein resides in the cytoplasm. The enzyme catalyses UDP-N-acetyl-alpha-D-muramoyl-L-alanine + D-glutamate + ATP = UDP-N-acetyl-alpha-D-muramoyl-L-alanyl-D-glutamate + ADP + phosphate + H(+). It participates in cell wall biogenesis; peptidoglycan biosynthesis. Its function is as follows. Cell wall formation. Catalyzes the addition of glutamate to the nucleotide precursor UDP-N-acetylmuramoyl-L-alanine (UMA). This Staphylococcus haemolyticus (strain JCSC1435) protein is UDP-N-acetylmuramoylalanine--D-glutamate ligase.